Consider the following 718-residue polypeptide: Manganese-exporting P-type ATPase (718 aa).

The 68-residue stretch at 11–78 folds into the HMA domain; sequence GRMRVKVDWV…AIKGAAHVAA (68 aa). The next 6 membrane-spanning stretches (helical) occupy residues 87 to 105, 128 to 146, 154 to 168, 177 to 191, 327 to 351, and 357 to 375; these read HSAE…GGVA, TVAT…RGAL, AGTD…VASL, LTVL…YLQD, VGEN…LITG, and MTML…TPTA. Aspartate 408 functions as the 4-aspartylphosphate intermediate in the catalytic mechanism. Residues aspartate 408, threonine 410, and aspartate 610 each contribute to the Mg(2+) site. 2 helical membrane passes run 661–680 and 690–709; these read AVDV…AAGL and PVLA…ANSS.

This sequence belongs to the cation transport ATPase (P-type) (TC 3.A.3) family. Type IB subfamily.

Its subcellular location is the cell membrane. It carries out the reaction Mn(2+)(in) + ATP + H2O = Mn(2+)(out) + ADP + phosphate + H(+). Its function is as follows. High affinity, slow turnover Mn(2+) transporting ATPase. In Mycobacterium bovis (strain ATCC BAA-935 / AF2122/97), this protein is Manganese-exporting P-type ATPase (ctpC).